Here is a 123-residue protein sequence, read N- to C-terminus: Ribonuclease P protein component 1 (123 aa).

Positions 73 to 93 are disordered; that stretch reads PDNGVGTAFKPAGGETRQTTG.

Belongs to the eukaryotic/archaeal RNase P protein component 1 family. As to quaternary structure, consists of a catalytic RNA component and at least 4-5 protein subunits.

The protein localises to the cytoplasm. The enzyme catalyses Endonucleolytic cleavage of RNA, removing 5'-extranucleotides from tRNA precursor.. Its function is as follows. Part of ribonuclease P, a protein complex that generates mature tRNA molecules by cleaving their 5'-ends. In Halobacterium salinarum (strain ATCC 29341 / DSM 671 / R1), this protein is Ribonuclease P protein component 1.